The sequence spans 213 residues: Uridine kinase (213 aa).

Residue 15–22 (GASASGKS) participates in ATP binding.

The protein belongs to the uridine kinase family.

The protein localises to the cytoplasm. The enzyme catalyses uridine + ATP = UMP + ADP + H(+). It catalyses the reaction cytidine + ATP = CMP + ADP + H(+). The protein operates within pyrimidine metabolism; CTP biosynthesis via salvage pathway; CTP from cytidine: step 1/3. It functions in the pathway pyrimidine metabolism; UMP biosynthesis via salvage pathway; UMP from uridine: step 1/1. This chain is Uridine kinase, found in Salmonella paratyphi A (strain ATCC 9150 / SARB42).